A 152-amino-acid polypeptide reads, in one-letter code: Large ribosomal subunit protein bL9 (152 aa).

It belongs to the bacterial ribosomal protein bL9 family.

Functionally, binds to the 23S rRNA. The polypeptide is Large ribosomal subunit protein bL9 (Prochlorococcus marinus (strain SARG / CCMP1375 / SS120)).